We begin with the raw amino-acid sequence, 440 residues long: Protein OSB3, chloroplastic/mitochondrial (440 aa).

The N-terminal 61 residues, 1–61, are a transit peptide targeting the chloroplast and mitochondrion; the sequence is MNLISRTLTR…AKVSVKPPLN (61 aa). In terms of domain architecture, SSB spans 80–178; sequence ISNWINLIGF…VMVQNLNFVQ (99 aa). 3 PDF region regions span residues 218 to 270, 294 to 342, and 380 to 428; these read WKHL…LKLE, WKDL…SKLP, and WKNL…SKLP.

As to expression, expressed primarily in the female gametophyte and in the floral abscission zone.

It localises to the mitochondrion. It is found in the plastid. The protein resides in the chloroplast. Its function is as follows. Binds single-stranded DNA. The sequence is that of Protein OSB3, chloroplastic/mitochondrial (OSB3) from Arabidopsis thaliana (Mouse-ear cress).